A 93-amino-acid chain; its full sequence is Large ribosomal subunit protein uL23cz/uL23cy (93 aa).

It belongs to the universal ribosomal protein uL23 family. As to quaternary structure, part of the 50S ribosomal subunit.

The protein localises to the plastid. It is found in the chloroplast. Its function is as follows. Binds to 23S rRNA. The sequence is that of Large ribosomal subunit protein uL23cz/uL23cy (rpl23-A) from Platanus occidentalis (Sycamore).